We begin with the raw amino-acid sequence, 264 residues long: uncharacterized protein (264 aa).

6 residues coordinate a divalent metal cation: His7, His9, Glu102, His138, His163, and Asp213.

This sequence belongs to the metallo-dependent hydrolases superfamily. TatD-type hydrolase family. The cofactor is a divalent metal cation.

This is an uncharacterized protein from Buchnera aphidicola subsp. Acyrthosiphon pisum (strain APS) (Acyrthosiphon pisum symbiotic bacterium).